Reading from the N-terminus, the 179-residue chain is Phospholipase A2 (179 aa).

The N-terminal stretch at 1-21 (MHALRSSVLALWLCLHVSVRA) is a signal peptide. The propeptide occupies 22–39 (WMTYRSANGLDEYEPEDR). Residues tryptophan 47, glycine 49, and glycine 51 each contribute to the Ca(2+) site. 5 disulfide bridges follow: cysteine 48–cysteine 70, cysteine 69–cysteine 109, cysteine 76–cysteine 102, cysteine 100–cysteine 133, and cysteine 142–cysteine 150. The active site involves histidine 73. Aspartate 74 is a binding site for Ca(2+). Aspartate 103 is an active-site residue. Asparagine 112 carries N-linked (GlcNAc...) asparagine glycosylation.

It depends on Ca(2+) as a cofactor. Expressed by the venom gland.

The protein localises to the secreted. The enzyme catalyses a 1,2-diacyl-sn-glycero-3-phosphocholine + H2O = a 1-acyl-sn-glycero-3-phosphocholine + a fatty acid + H(+). PLA2 catalyzes the calcium-dependent hydrolysis of the 2-acyl groups in 3-sn-phosphoglycerides. This Xylocopa appendiculata circumvolans (Japanese carpenter bee) protein is Phospholipase A2.